Here is a 472-residue protein sequence, read N- to C-terminus: Methanethiol oxidase (472 aa).

Belongs to the selenium-binding protein family.

The protein localises to the nucleus. The protein resides in the cytoplasm. Its subcellular location is the cytosol. It localises to the membrane. It catalyses the reaction methanethiol + O2 + H2O = hydrogen sulfide + formaldehyde + H2O2 + H(+). The protein operates within organosulfur degradation. Its function is as follows. Catalyzes the oxidation of methanethiol, an organosulfur compound known to be produced in substantial amounts by gut bacteria. Selenium-binding protein which may be involved in the sensing of reactive xenobiotics in the cytoplasm. May be involved in intra-Golgi protein transport. The chain is Methanethiol oxidase (selenbp1-b) from Xenopus laevis (African clawed frog).